The following is an 802-amino-acid chain: MRRLTMYPEQPDENRESIVMPLFEVVVYPKSRAKFLADKVTGEILLNDMKNAESVSAIGLTVKNGTKASDLSEESLYKIGNLLNITYVQPSDDGYLVVAKGIERVEAVSLYQKNGLFYATYRPVHDLPDFDEDAETEVMANIKKTIHEISARFQGSEQFTKSIDKMDSIDQIMGFVMPYIPVKLAEKQRLLELASVRERYLLFLHILTKHKENINLQIEMAKKVTDKISKSNREAMLREQLKVIQEELNEGDDSASGDAAYREKIENSTMPDEVKKKAFSELKKLETGGSHNPEAPGIRNYLDLLLDLPWITEEKKSIDIAEARRVLESNHNGLEKVKERIIQHLAVMKLKHEKQGSILLLIGPPGTGKTSLGKSIADALGRKYIRISLGGVKDEAEIRGHRRTYIGALPGRIIQGMRKAGTKNPVFILDEVDKLSASYSGDPASALLEVLDPEQNSTFSDHYLEIPYDLSDVLFIATANSMANIPWPLLDRMETIEISGYTKNEKLAIAKDHLVPCILEDHGLDAEKLKIEDEALKVIIDKYTREAGVRGLKKQLAKTARFVSEKIVSGKADLPYVVRADMLKEILGKEIIRQEEARKENVPGVVTGLAWTPVGGDILFIEGTFMPGSGKLTLTGQLGDVMKESAKISLSLVRSRLANTANSFDFTSSDIHIHVPSGATPKDGPSAGVTLFTALTSLIIGKAVDPKLAMTGEITLSGAVLPVGGIKEKVLAAHRAGIKKIILPKENERDLEDVPEDARNELQFVPVETIEEVLREALDIDLPRPVVPSSYPGSSYAPAHSV.

The Lon N-terminal domain occupies 17-211 (SIVMPLFEVV…LFLHILTKHK (195 aa)). Residue 363–370 (GPPGTGKT) participates in ATP binding. A Lon proteolytic domain is found at 600-780 (ENVPGVVTGL…EEVLREALDI (181 aa)). Active-site residues include Ser-686 and Lys-729.

It belongs to the peptidase S16 family. As to quaternary structure, homohexamer. Organized in a ring with a central cavity.

The protein localises to the cytoplasm. The enzyme catalyses Hydrolysis of proteins in presence of ATP.. Functionally, ATP-dependent serine protease that mediates the selective degradation of mutant and abnormal proteins as well as certain short-lived regulatory proteins. Required for cellular homeostasis and for survival from DNA damage and developmental changes induced by stress. Degrades polypeptides processively to yield small peptide fragments that are 5 to 10 amino acids long. Binds to DNA in a double-stranded, site-specific manner. In Methanosarcina barkeri (strain Fusaro / DSM 804), this protein is Lon protease.